The following is a 337-amino-acid chain: Ornithine carbamoyltransferase (337 aa).

Residues 57-60 (STRT), Q84, R108, and 135-138 (HPTQ) each bind carbamoyl phosphate. L-ornithine-binding positions include N167, D231, and 235 to 236 (SM). Residues 272–273 (CL) and R317 each bind carbamoyl phosphate.

It belongs to the aspartate/ornithine carbamoyltransferase superfamily. OTCase family.

The protein resides in the cytoplasm. The enzyme catalyses carbamoyl phosphate + L-ornithine = L-citrulline + phosphate + H(+). It functions in the pathway amino-acid degradation; L-arginine degradation via ADI pathway; carbamoyl phosphate from L-arginine: step 2/2. Reversibly catalyzes the transfer of the carbamoyl group from carbamoyl phosphate (CP) to the N(epsilon) atom of ornithine (ORN) to produce L-citrulline. The sequence is that of Ornithine carbamoyltransferase from Streptococcus equi subsp. zooepidemicus (strain MGCS10565).